We begin with the raw amino-acid sequence, 428 residues long: Maltoporin (428 aa).

The N-terminal stretch at 1 to 24 (MTTLRKLPIALAVAAGVLSTQAMA) is a signal peptide.

This sequence belongs to the porin LamB (TC 1.B.3) family. As to quaternary structure, homotrimer formed of three 18-stranded antiparallel beta-barrels, containing three independent channels.

The protein resides in the cell outer membrane. The catalysed reaction is beta-maltose(in) = beta-maltose(out). Its function is as follows. Involved in the transport of maltose and maltodextrins. This is Maltoporin from Yersinia enterocolitica serotype O:8 / biotype 1B (strain NCTC 13174 / 8081).